A 776-amino-acid polypeptide reads, in one-letter code: MADRPAIQLIDEEKEFHQSALQYFQQCIGNRDVGLDYHVISVFGSQSSGKSTLLNVLFNTNFDTMDAQVKRQQTTKGIWLAHTKQVNTTIEIDNDRPDIFVLDVEGSDGSERGEDQDFERKAALFAIAVSEVLIVNMWEQQIGLYQGNNMALLKTVFEVNLSLFGKNDNDHKVLLLFVIRDHVGVTPLSSLSDSVTRELEKIWTELSKPAGCEGSSLYDYFDLKFVGLAHKLLQEDKFTQDVKKLGDSFVMKGTENYYFKPQYHHRLPLDGWTMYAENCWDQIERNKDLDLPTQQILVARFKTEEISNEALEEFISKYDESIAPLKGNLGSLTSQLVKLKEECLTKYDEQASRYARNVYMEKREALNTKLNSHISGTINEFLESLMEKLWDDLKLEVSSRDKATTSFVESVAAGKSKIEKEFNESMETFKKLGLLISNEEITCKFSDDIEERIKQLRDAELKAKIGRIKKNLVPELKDHVIHLLSHPSKKVWDDIMNDFESTIKDNISAYQVEKDKYDFKIGLSESENAKIYKNIRILAWRTLDTTVHDYLKIDTIVSILRDRFEDVFRYDAEGSPRLWKTEEEIDGAFRVAKEHALEVFEVLSLAVTSDNVEIIPDVPMAEEESGEDNEIYRDNEGVFHSRRFAHILTELQKENVLDQFRRQINITVLDSKRSIITTRTHIPPWIYVLLAVLGWNEFVAVIRNPLFVTLTLILGATFFVIHKFGLWGPVVNVVQSAVGETRTAIKDKLRQFVVEDHEVKESFEMKDFSKNEQKEK.

The Cytoplasmic portion of the chain corresponds to 1 to 681; that stretch reads MADRPAIQLI…KRSIITTRTH (681 aa). In terms of domain architecture, GB1/RHD3-type G spans 34 to 263; it reads GLDYHVISVF…TENYYFKPQY (230 aa). 44 to 51 contacts GTP; that stretch reads GSQSSGKS. The chain crosses the membrane as a helical span at residues 682–702; it reads IPPWIYVLLAVLGWNEFVAVI. At 703 to 705 the chain is on the lumenal side; it reads RNP. Residues 706 to 726 traverse the membrane as a helical segment; it reads LFVTLTLILGATFFVIHKFGL. Over 727–776 the chain is Cytoplasmic; that stretch reads WGPVVNVVQSAVGETRTAIKDKLRQFVVEDHEVKESFEMKDFSKNEQKEK.

The protein belongs to the TRAFAC class dynamin-like GTPase superfamily. GB1/RHD3 GTPase family. RHD3 subfamily. As to quaternary structure, interacts with RTN1 and YOP1; GTP binding is not required for these interactions.

The protein localises to the endoplasmic reticulum membrane. Functionally, cooperates with the reticulon proteins RTN1 and RTN2 and the tubule-shaping DP1 family protein YOP1 to generate and maintain the structure of the tubular endoplasmic reticulum network. Has GTPase activity, which is required for its function in ER organization. The polypeptide is Protein SEY1 (Saccharomyces cerevisiae (strain ATCC 204508 / S288c) (Baker's yeast)).